The following is a 417-amino-acid chain: 1-deoxy-D-xylulose 5-phosphate reductoisomerase (417 aa).

Positions 10, 11, 12, 13, 36, 37, 38, and 130 each coordinate NADPH. Lysine 131 is a binding site for 1-deoxy-D-xylulose 5-phosphate. Glutamate 132 contacts NADPH. Position 156 (aspartate 156) interacts with Mn(2+). Serine 157, glutamate 158, serine 194, and histidine 217 together coordinate 1-deoxy-D-xylulose 5-phosphate. A Mn(2+)-binding site is contributed by glutamate 158. Residue glycine 223 participates in NADPH binding. Positions 230, 235, 236, and 239 each coordinate 1-deoxy-D-xylulose 5-phosphate. Glutamate 239 lines the Mn(2+) pocket.

Belongs to the DXR family. It depends on Mg(2+) as a cofactor. Mn(2+) serves as cofactor.

It carries out the reaction 2-C-methyl-D-erythritol 4-phosphate + NADP(+) = 1-deoxy-D-xylulose 5-phosphate + NADPH + H(+). The protein operates within isoprenoid biosynthesis; isopentenyl diphosphate biosynthesis via DXP pathway; isopentenyl diphosphate from 1-deoxy-D-xylulose 5-phosphate: step 1/6. In terms of biological role, catalyzes the NADPH-dependent rearrangement and reduction of 1-deoxy-D-xylulose-5-phosphate (DXP) to 2-C-methyl-D-erythritol 4-phosphate (MEP). In Synechococcus sp. (strain CC9902), this protein is 1-deoxy-D-xylulose 5-phosphate reductoisomerase.